The chain runs to 125 residues: Large ribosomal subunit protein bL20 (125 aa).

This sequence belongs to the bacterial ribosomal protein bL20 family.

Binds directly to 23S ribosomal RNA and is necessary for the in vitro assembly process of the 50S ribosomal subunit. It is not involved in the protein synthesizing functions of that subunit. The sequence is that of Large ribosomal subunit protein bL20 from Methylobacterium radiotolerans (strain ATCC 27329 / DSM 1819 / JCM 2831 / NBRC 15690 / NCIMB 10815 / 0-1).